The primary structure comprises 261 residues: RING-H2 finger protein ATL58 (261 aa).

Residues Ala-25–Ile-45 traverse the membrane as a helical segment. The segment at Cys-100–Arg-142 adopts an RING-type; atypical zinc-finger fold. Disordered regions lie at residues Arg-149–His-227 and Met-241–Gly-261. Polar residues predominate over residues Ser-194–Asn-221.

Belongs to the RING-type zinc finger family. ATL subfamily.

It localises to the membrane. The enzyme catalyses S-ubiquitinyl-[E2 ubiquitin-conjugating enzyme]-L-cysteine + [acceptor protein]-L-lysine = [E2 ubiquitin-conjugating enzyme]-L-cysteine + N(6)-ubiquitinyl-[acceptor protein]-L-lysine.. It functions in the pathway protein modification; protein ubiquitination. The polypeptide is RING-H2 finger protein ATL58 (ATL58) (Arabidopsis thaliana (Mouse-ear cress)).